Here is a 72-residue protein sequence, read N- to C-terminus: Beta-defensin 104A (72 aa).

The signal sequence occupies residues Met1–Ser22. Intrachain disulfides connect Cys30–Cys57, Cys37–Cys51, and Cys41–Cys58.

It belongs to the beta-defensin family.

It is found in the secreted. Functionally, has antimicrobial activity. The chain is Beta-defensin 104A (DEFB104A) from Gorilla gorilla gorilla (Western lowland gorilla).